Here is a 132-residue protein sequence, read N- to C-terminus: Large ribosomal subunit protein bL17 (132 aa).

Belongs to the bacterial ribosomal protein bL17 family. In terms of assembly, part of the 50S ribosomal subunit. Contacts protein L32.

This chain is Large ribosomal subunit protein bL17, found in Variovorax paradoxus (strain S110).